The chain runs to 459 residues: tRNA modification GTPase MnmE (459 aa).

Positions 29, 91, and 130 each coordinate (6S)-5-formyl-5,6,7,8-tetrahydrofolate. A TrmE-type G domain is found at 225–381 (GVKVAIVGRP…LEEALEQLVT (157 aa)). Asn-235 serves as a coordination point for K(+). GTP is bound by residues 235-240 (NVGKSS), 254-260 (TDLPGTT), and 279-282 (DTAG). Position 239 (Ser-239) interacts with Mg(2+). The K(+) site is built by Thr-254, Leu-256, and Thr-259. A Mg(2+)-binding site is contributed by Thr-260. Lys-459 is a (6S)-5-formyl-5,6,7,8-tetrahydrofolate binding site.

Belongs to the TRAFAC class TrmE-Era-EngA-EngB-Septin-like GTPase superfamily. TrmE GTPase family. As to quaternary structure, homodimer. Heterotetramer of two MnmE and two MnmG subunits. The cofactor is K(+).

It is found in the cytoplasm. Its function is as follows. Exhibits a very high intrinsic GTPase hydrolysis rate. Involved in the addition of a carboxymethylaminomethyl (cmnm) group at the wobble position (U34) of certain tRNAs, forming tRNA-cmnm(5)s(2)U34. This Synechococcus sp. (strain JA-2-3B'a(2-13)) (Cyanobacteria bacterium Yellowstone B-Prime) protein is tRNA modification GTPase MnmE.